A 173-amino-acid chain; its full sequence is S-ribosylhomocysteine lyase (173 aa).

Fe cation contacts are provided by His-54, His-58, and Cys-128.

It belongs to the LuxS family. In terms of assembly, homodimer. Requires Fe cation as cofactor.

The catalysed reaction is S-(5-deoxy-D-ribos-5-yl)-L-homocysteine = (S)-4,5-dihydroxypentane-2,3-dione + L-homocysteine. Involved in the synthesis of autoinducer 2 (AI-2) which is secreted by bacteria and is used to communicate both the cell density and the metabolic potential of the environment. The regulation of gene expression in response to changes in cell density is called quorum sensing. Catalyzes the transformation of S-ribosylhomocysteine (RHC) to homocysteine (HC) and 4,5-dihydroxy-2,3-pentadione (DPD). This is S-ribosylhomocysteine lyase from Hydrogenovibrio crunogenus (strain DSM 25203 / XCL-2) (Thiomicrospira crunogena).